Reading from the N-terminus, the 421-residue chain is UDP-N-acetylglucosamine 1-carboxyvinyltransferase (421 aa).

22–23 contacts phosphoenolpyruvate; sequence KN. R93 lines the UDP-N-acetyl-alpha-D-glucosamine pocket. C117 acts as the Proton donor in catalysis. C117 carries the post-translational modification 2-(S-cysteinyl)pyruvic acid O-phosphothioketal. Residues 122–126, D308, and L330 contribute to the UDP-N-acetyl-alpha-D-glucosamine site; that span reads RPVDL.

This sequence belongs to the EPSP synthase family. MurA subfamily.

It localises to the cytoplasm. The catalysed reaction is phosphoenolpyruvate + UDP-N-acetyl-alpha-D-glucosamine = UDP-N-acetyl-3-O-(1-carboxyvinyl)-alpha-D-glucosamine + phosphate. Its pathway is cell wall biogenesis; peptidoglycan biosynthesis. Its function is as follows. Cell wall formation. Adds enolpyruvyl to UDP-N-acetylglucosamine. The polypeptide is UDP-N-acetylglucosamine 1-carboxyvinyltransferase (Wolinella succinogenes (strain ATCC 29543 / DSM 1740 / CCUG 13145 / JCM 31913 / LMG 7466 / NCTC 11488 / FDC 602W) (Vibrio succinogenes)).